The following is a 395-amino-acid chain: Altered inheritance of mitochondria protein 39, mitochondrial (395 aa).

Residues Gln156 to Tyr176 form a helical membrane-spanning segment.

The protein belongs to the AIM39 family.

It is found in the mitochondrion membrane. In Saccharomyces cerevisiae (strain ATCC 204508 / S288c) (Baker's yeast), this protein is Altered inheritance of mitochondria protein 39, mitochondrial (AIM39).